A 405-amino-acid polypeptide reads, in one-letter code: Arginine deiminase (405 aa).

Catalysis depends on cysteine 395, which acts as the Amidino-cysteine intermediate.

This sequence belongs to the arginine deiminase family.

The protein resides in the cytoplasm. It catalyses the reaction L-arginine + H2O = L-citrulline + NH4(+). Its pathway is amino-acid degradation; L-arginine degradation via ADI pathway; carbamoyl phosphate from L-arginine: step 1/2. This Rhodococcus opacus (strain B4) protein is Arginine deiminase.